We begin with the raw amino-acid sequence, 408 residues long: Glutathione-independent formaldehyde dehydrogenase (408 aa).

A Zn(2+)-binding site is contributed by C61. G62, S63, and H66 together coordinate NAD(+). The Zn(2+) site is built by H82, C112, C115, C118, C126, and D184. V212, D232, R237, V277, H284, P311, L313, G348, and T350 together coordinate NAD(+).

This sequence belongs to the zinc-containing alcohol dehydrogenase family. The cofactor is Zn(2+).

It catalyses the reaction formaldehyde + NAD(+) + H2O = formate + NADH + 2 H(+). Its activity is regulated as follows. Activity is not inhibited by EDTA, which is probably not sufficient to displace the bound metal. In terms of biological role, dehydrogenase that catalyzes the NAD(+)-dependent oxidation of formaldehyde. Exhibits lower activity with acetaldehyde (about 10-fold lower than for formaldehyde), but cannot use methanol, ethanol, 1-butanol, glyoxal or formic acid. Is involved in formaldehyde detoxification. The chain is Glutathione-independent formaldehyde dehydrogenase from Bacillus subtilis (strain 168).